A 728-amino-acid polypeptide reads, in one-letter code: Dehydrocurvularin biosynthesis regulator (728 aa).

Positions 28–58 (CWECKRRKMKCRFDPRIASACNGCRRRGSPC) form a DNA-binding region, zn(2)-C6 fungal-type. Disordered stretches follow at residues 75 to 130 (GTTS…TSQR) and 606 to 626 (QHATTASKPPVDRSPSSNSDA). Positions 89–109 (RATTPSERTDQILTPVSTVRE) are enriched in polar residues.

It localises to the nucleus. Transcription factor involved in regulation of the dehydrocurvularin biosynthesis gene cluster. The sequence is that of Dehydrocurvularin biosynthesis regulator from Aspergillus terreus.